The sequence spans 298 residues: Acetyl-coenzyme A carboxylase carboxyl transferase subunit beta (298 aa).

The interval 1–21 (MNQEVKSGKVLSPSTPWTQRP) is disordered. The C4-type zinc finger occupies 20-67 (RPVPGIEVADEQQTLKATFTEPTIECPECHALVTRTAISFNAYVCPQC). The 258-residue stretch at 41–298 (PTIECPECHA…RLVSKLMNLP (258 aa)) folds into the CoA carboxyltransferase N-terminal domain. Cys45, Cys48, Cys64, and Cys67 together coordinate Zn(2+).

Belongs to the AccD/PCCB family. As to quaternary structure, acetyl-CoA carboxylase is a heterohexamer composed of biotin carboxyl carrier protein (AccB), biotin carboxylase (AccC) and two subunits each of ACCase subunit alpha (AccA) and ACCase subunit beta (AccD). It depends on Zn(2+) as a cofactor.

Its subcellular location is the cytoplasm. It catalyses the reaction N(6)-carboxybiotinyl-L-lysyl-[protein] + acetyl-CoA = N(6)-biotinyl-L-lysyl-[protein] + malonyl-CoA. It functions in the pathway lipid metabolism; malonyl-CoA biosynthesis; malonyl-CoA from acetyl-CoA: step 1/1. Component of the acetyl coenzyme A carboxylase (ACC) complex. Biotin carboxylase (BC) catalyzes the carboxylation of biotin on its carrier protein (BCCP) and then the CO(2) group is transferred by the transcarboxylase to acetyl-CoA to form malonyl-CoA. In Acinetobacter baumannii (strain SDF), this protein is Acetyl-coenzyme A carboxylase carboxyl transferase subunit beta.